The primary structure comprises 499 residues: L-arabinose isomerase (499 aa).

Residues Glu-306, Glu-333, His-350, and His-449 each contribute to the Mn(2+) site.

This sequence belongs to the arabinose isomerase family. It depends on Mn(2+) as a cofactor.

The enzyme catalyses beta-L-arabinopyranose = L-ribulose. The protein operates within carbohydrate degradation; L-arabinose degradation via L-ribulose; D-xylulose 5-phosphate from L-arabinose (bacterial route): step 1/3. Its function is as follows. Catalyzes the conversion of L-arabinose to L-ribulose. This Aeromonas hydrophila subsp. hydrophila (strain ATCC 7966 / DSM 30187 / BCRC 13018 / CCUG 14551 / JCM 1027 / KCTC 2358 / NCIMB 9240 / NCTC 8049) protein is L-arabinose isomerase.